The following is a 381-amino-acid chain: Gustatory and pheromone receptor 39a, isoform C (381 aa).

Residues 1–37 (MDFQPGELCAYYRLCRYLGIFCIDYNPTKKKFRLRRS) are Cytoplasmic-facing. The chain crosses the membrane as a helical span at residues 38–58 (VLCYIVHFALQAYLVGCISVM). Topologically, residues 59–79 (VTYWRRCFKSELTTTGNHFDR) are extracellular. The chain crosses the membrane as a helical span at residues 80-100 (LVMVIALGILVVQNAWLIWLQ). The Cytoplasmic segment spans residues 101 to 129 (APHLRIVRQIEFYRRNHLANVRLLLPKRL). Residues 130–150 (LWLIIATNVVYMANFIKTCIF) form a helical membrane-spanning segment. At 151–171 (EWLTDASRLFVITSLGFPLRY) the chain is on the extracellular side. A helical transmembrane segment spans residues 172 to 192 (LVTSFTMGTYFCMVHIVRLVL). The Cytoplasmic portion of the chain corresponds to 193–239 (DWNQSQINAIIDESADLKMTSPNRLRLRVCLEMHDRLMLLCNDEISL). A helical membrane pass occupies residues 240–260 (VYGFIAWLSWMFASLDVTGVI). The Extracellular segment spans residues 261-271 (YLTMVIQTKKS). The chain crosses the membrane as a helical span at residues 272-292 (IVLKLITNVVWLSPTFMTCAA). The Cytoplasmic portion of the chain corresponds to 293-350 (SFMSNRVTIQANKTAKMLTKVPRTGTGLDRMIEKFLLKNLRQKPILTAYGFFALDKST). Residues 351 to 371 (LFKLFTAIFTYMVILVQFKEM) traverse the membrane as a helical segment. The Extracellular segment spans residues 372-381 (ENSTKSINKF). Residue N373 is glycosylated (N-linked (GlcNAc...) asparagine).

Belongs to the insect chemoreceptor superfamily. Gustatory receptor (GR) family. Gr21a subfamily. As to expression, expressed in the adult labellar chemosensory neurons. In larvae, is expressed in neurons of the terminal external chemosensory organ, as well as in the dorsal pharyngeal sense organ.

The protein localises to the cell membrane. In terms of biological role, gustatory receptor which mediates acceptance or avoidance behavior, depending on its substrates. Plays a role in sustaining courtship behavior in males, possibly through the reception of a stimulating arrestant pheromone. The sequence is that of Gustatory and pheromone receptor 39a, isoform C (Gr39a) from Drosophila melanogaster (Fruit fly).